A 182-amino-acid polypeptide reads, in one-letter code: Putative pre-16S rRNA nuclease (182 aa).

This sequence belongs to the YqgF nuclease family.

It localises to the cytoplasm. In terms of biological role, could be a nuclease involved in processing of the 5'-end of pre-16S rRNA. The chain is Putative pre-16S rRNA nuclease from Corynebacterium glutamicum (strain ATCC 13032 / DSM 20300 / JCM 1318 / BCRC 11384 / CCUG 27702 / LMG 3730 / NBRC 12168 / NCIMB 10025 / NRRL B-2784 / 534).